The following is a 410-amino-acid chain: Thyroid hormone receptor alpha (410 aa).

The segment at 1–32 is disordered; that stretch reads MEQKPSKVECGSDPEESSTRSPDGKRKRKNGQ. A modulating region spans residues 1–52; it reads MEQKPSKVECGSDPEESSTRSPDGKRKRKNGQCSLKTSMSGYIPSYLDKDEQ. Residues Cys53, Cys56, Cys70, Cys73, Cys91, Cys97, Cys107, and Cys110 each coordinate Zn(2+). NR C4-type zinc fingers lie at residues 53 to 73 and 91 to 115; these read CVVC…CEGC and CKYD…FKKC. The segment at residues 53-127 is a DNA-binding region (nuclear receptor); it reads CVVCGDKATG…VGMAMDLVLD (75 aa). The 245-residue stretch at 163–407 folds into the NR LBD domain; sequence EEWDLIHVAT…PPLFLEVFED (245 aa). 3,3',5-triiodo-L-thyronine is bound by residues Arg228 and Ser277.

It belongs to the nuclear hormone receptor family. NR1 subfamily. Binds DNA as a dimer; homodimer and heterodimer with RXRB. Interacts with NCOA3 and NCOA6 coactivators, leading to a strong increase of transcription of target genes. Probably interacts with SFPQ. Interacts with C1D. Interacts with AKAP13. Interacts with TP53INP2. Interacts with PER2. Interacts with TACC1. The interaction with isoform alpha-1, but not alpha-2, is decreased in the presence of thyroid hormone T3.

The protein localises to the nucleus. It localises to the cytoplasm. In terms of biological role, nuclear hormone receptor that can act as a repressor or activator of transcription. High affinity receptor for thyroid hormones, including triiodothyronine and thyroxine. This is Thyroid hormone receptor alpha (THRA) from Ovis aries (Sheep).